A 619-amino-acid polypeptide reads, in one-letter code: Chaperone protein HscA homolog (619 aa).

Belongs to the heat shock protein 70 family.

Chaperone involved in the maturation of iron-sulfur cluster-containing proteins. Has a low intrinsic ATPase activity which is markedly stimulated by HscB. In Chromobacterium violaceum (strain ATCC 12472 / DSM 30191 / JCM 1249 / CCUG 213 / NBRC 12614 / NCIMB 9131 / NCTC 9757 / MK), this protein is Chaperone protein HscA homolog.